We begin with the raw amino-acid sequence, 503 residues long: Basic immunoglobulin-like variable motif-containing protein (503 aa).

Over residues 1 to 26 (MPNVAETERSNDSGNGEHKSERKSPE) the composition is skewed to basic and acidic residues. Disordered regions lie at residues 1 to 33 (MPNV…QGAV), 152 to 184 (TTNS…ECPQ), and 438 to 469 (ESQP…GRSF). The span at 155 to 172 (SKHKSGNAKKQVSKRKTS) shows a compositional bias: basic residues. Over residues 173 to 184 (DKKGRYQKECPQ) the composition is skewed to basic and acidic residues.

It belongs to the BIVM family. Widely expressed. Expressed at higher level in spleen, ovary, small intestine, colon, peripheral blood leukocytes and liver. Also expressed in testis, ovary, aorta, appendix, trachea, pituitary gland, bladder, uterus, spinal cord, salivary gland, stomach, mammary gland and bone marrow. Weakly or not expressed in fetal spleen, adult thymus and certain cancer cell lines.

The protein resides in the cytoplasm. It localises to the nucleus. This Homo sapiens (Human) protein is Basic immunoglobulin-like variable motif-containing protein (BIVM).